A 1119-amino-acid chain; its full sequence is Solute carrier family 38 member 10 (1119 aa).

Transmembrane regions (helical) follow at residues 4-24 (AAAS…GVSV), 36-58 (IVLG…MFLV), 84-104 (LVET…YVVI), 120-140 (VGGT…VLPL), 153-173 (FSAM…LSSL), 229-249 (IFAS…FFGY), 272-292 (MLRV…ILPC), 323-343 (ALTL…PNVE), 345-365 (ILGL…PALI), and 378-398 (VVLW…LSVS). Disordered stretches follow at residues 438-691 (AEDG…EEAG) and 731-1071 (KEIH…DGVI). Composition is skewed to basic and acidic residues over residues 439–454 (EDGR…REEL), 466–475 (PGREDGKEAP), 493–522 (EAHR…ENKP), 544–559 (DSER…EVGK), and 592–603 (AKEDLGPGDRGL). Residue Ser612 is modified to Phosphoserine. Over residues 652–667 (PPLPAEKPAPGPGLPP) the composition is skewed to pro residues. Composition is skewed to basic and acidic residues over residues 668–677 (EPREQRDVER), 731–752 (KEIH…EVHQ), and 763–773 (EAPEGKARETV). Thr772 is modified (phosphothreonine). Phosphoserine is present on Ser802. Basic and acidic residues-rich tracts occupy residues 832-841 (KLRDGQKDAA) and 863-876 (PARE…RLAE). Residues 880 to 889 (GQSQDVTGGS) show a composition bias toward polar residues. Phosphoserine occurs at positions 889, 965, and 997. Basic and acidic residues-rich tracts occupy residues 975 to 1005 (HRLD…RGGE), 1012 to 1022 (PRQRPEPELGL), and 1033 to 1042 (DNAKPNRDLK).

The protein belongs to the amino acid/polyamine transporter 2 family.

The protein localises to the membrane. It carries out the reaction L-glutamate(out) = L-glutamate(in). The enzyme catalyses L-glutamine(out) = L-glutamine(in). It catalyses the reaction L-alanine(in) = L-alanine(out). The catalysed reaction is L-serine(in) = L-serine(out). It carries out the reaction L-leucine(in) = L-leucine(out). Facilitates bidirectional transport of amino acids. May act as a glutamate sensor that regulates glutamate-glutamine cycle and mTOR signaling in the brain. The transport mechanism remains to be elucidated. This Homo sapiens (Human) protein is Solute carrier family 38 member 10.